The sequence spans 358 residues: MGSIEVAERTTVGLAAKDPSGILTPYTYTLRNTGPDDVYIKIHYCGVCHSDLHQIKNDLGMSNYPMVPGHEVVGEVLEVGSNVTRFKVGEIVGVGLLVGCCKSCRACDSEIEQYCNKKIWSYNDVYTDGKITQGGFAESTVVEQKFVVKIPEGLAPEQVAPLLCAGVTVYSPLSHFGLKTPGLRGGILGLGGVGHMGVKVAKAFGHHVTVISSSDKKKKEALEDLGADSYLVSSDTVGMQEAADSLDYIIDTVPVGHPLEPYLSLLKIDGKLILMGVINTPLQFVTPMVMLGRKSITGSFVGSVKETEEMLEFWKEKGLSSMIEIVTMDYINKAFERLEKNDVRYRFVVDVKGSKFED.

An Enoyl reductase (ER) domain is found at 21-349 (GILTPYTYTL…KNDVRYRFVV (329 aa)). Cysteine 48 provides a ligand contact to Zn(2+). Serine 50 contributes to the NADP(+) binding site. Histidine 70, glutamate 71, cysteine 101, cysteine 104, cysteine 107, cysteine 115, and cysteine 164 together coordinate Zn(2+). Residues threonine 168, 189-194 (GLGGVG), 212-217 (SSSDKK), threonine 252, glycine 276, and 299-301 (SFV) contribute to the NADP(+) site.

Belongs to the zinc-containing alcohol dehydrogenase family. Homodimer. It depends on Zn(2+) as a cofactor.

The enzyme catalyses (E)-cinnamyl alcohol + NADP(+) = (E)-cinnamaldehyde + NADPH + H(+). It catalyses the reaction (E)-coniferol + NADP(+) = (E)-coniferaldehyde + NADPH + H(+). The catalysed reaction is (E)-sinapyl alcohol + NADP(+) = (E)-sinapaldehyde + NADPH + H(+). It carries out the reaction (E)-4-coumaroyl alcohol + NADP(+) = (E)-4-coumaraldehyde + NADPH + H(+). It participates in aromatic compound metabolism; phenylpropanoid biosynthesis. Involved in lignin biosynthesis. Catalyzes the final step specific for the production of lignin monomers. Catalyzes the NADPH-dependent reduction of coniferaldehyde, 5-hydroxyconiferaldehyde, sinapaldehyde, 4-coumaraldehyde and caffeyl aldehyde to their respective alcohols. Can use coumaraldehyde and, with a lower efficiency, coniferaldehyde and sinapaldehyde as substrates. This chain is Cinnamyl alcohol dehydrogenase 1, found in Medicago truncatula (Barrel medic).